The primary structure comprises 389 residues: Cellobiose 2-epimerase (389 aa).

The protein belongs to the cellobiose 2-epimerase family. In terms of assembly, monomer.

The catalysed reaction is D-cellobiose = beta-D-glucosyl-(1-&gt;4)-D-mannopyranose. In terms of biological role, catalyzes the reversible epimerization of cellobiose to 4-O-beta-D-glucopyranosyl-D-mannose (Glc-Man). Catalyzes epimerization but also isomerization for beta-1,4- and alpha-1,4-gluco-oligosaccharides. Can use cellobiose, lactose, cellotriose, maltose and maltotriose. The protein is Cellobiose 2-epimerase of Dictyoglomus turgidum (strain DSM 6724 / Z-1310).